The following is a 231-amino-acid chain: 7-cyano-7-deazaguanine synthase (231 aa).

17 to 27 (FSGGMDSFTLL) contacts ATP. Residues Cys193, Cys201, Cys204, and Cys207 each contribute to the Zn(2+) site.

Belongs to the QueC family. Zn(2+) is required as a cofactor.

The enzyme catalyses 7-carboxy-7-deazaguanine + NH4(+) + ATP = 7-cyano-7-deazaguanine + ADP + phosphate + H2O + H(+). The protein operates within purine metabolism; 7-cyano-7-deazaguanine biosynthesis. Catalyzes the ATP-dependent conversion of 7-carboxy-7-deazaguanine (CDG) to 7-cyano-7-deazaguanine (preQ(0)). The chain is 7-cyano-7-deazaguanine synthase from Hahella chejuensis (strain KCTC 2396).